Reading from the N-terminus, the 428-residue chain is Serine--tRNA ligase (428 aa).

236 to 238 contacts L-serine; that stretch reads TAE. Residue 267-269 coordinates ATP; the sequence is RSE. Residue glutamate 290 participates in L-serine binding. Residue 354–357 participates in ATP binding; that stretch reads EISS. L-serine is bound at residue serine 388.

It belongs to the class-II aminoacyl-tRNA synthetase family. Type-1 seryl-tRNA synthetase subfamily. Homodimer. The tRNA molecule binds across the dimer.

The protein resides in the cytoplasm. The enzyme catalyses tRNA(Ser) + L-serine + ATP = L-seryl-tRNA(Ser) + AMP + diphosphate + H(+). The catalysed reaction is tRNA(Sec) + L-serine + ATP = L-seryl-tRNA(Sec) + AMP + diphosphate + H(+). It participates in aminoacyl-tRNA biosynthesis; selenocysteinyl-tRNA(Sec) biosynthesis; L-seryl-tRNA(Sec) from L-serine and tRNA(Sec): step 1/1. Its function is as follows. Catalyzes the attachment of serine to tRNA(Ser). Is also able to aminoacylate tRNA(Sec) with serine, to form the misacylated tRNA L-seryl-tRNA(Sec), which will be further converted into selenocysteinyl-tRNA(Sec). The sequence is that of Serine--tRNA ligase from Psychrobacter cryohalolentis (strain ATCC BAA-1226 / DSM 17306 / VKM B-2378 / K5).